Here is a 417-residue protein sequence, read N- to C-terminus: NADH-quinone oxidoreductase subunit D (417 aa).

This sequence belongs to the complex I 49 kDa subunit family. In terms of assembly, NDH-1 is composed of 14 different subunits. Subunits NuoB, C, D, E, F, and G constitute the peripheral sector of the complex.

It localises to the cell inner membrane. It catalyses the reaction a quinone + NADH + 5 H(+)(in) = a quinol + NAD(+) + 4 H(+)(out). Its function is as follows. NDH-1 shuttles electrons from NADH, via FMN and iron-sulfur (Fe-S) centers, to quinones in the respiratory chain. The immediate electron acceptor for the enzyme in this species is believed to be ubiquinone. Couples the redox reaction to proton translocation (for every two electrons transferred, four hydrogen ions are translocated across the cytoplasmic membrane), and thus conserves the redox energy in a proton gradient. The polypeptide is NADH-quinone oxidoreductase subunit D (Legionella pneumophila (strain Corby)).